A 312-amino-acid chain; its full sequence is tRNA dimethylallyltransferase (312 aa).

14-21 (GPTASGKS) is an ATP binding site. A substrate-binding site is contributed by 16 to 21 (TASGKS). Interaction with substrate tRNA regions lie at residues 39–42 (DSSL) and 163–167 (QRLQR).

This sequence belongs to the IPP transferase family. Monomer. It depends on Mg(2+) as a cofactor.

It catalyses the reaction adenosine(37) in tRNA + dimethylallyl diphosphate = N(6)-dimethylallyladenosine(37) in tRNA + diphosphate. Its function is as follows. Catalyzes the transfer of a dimethylallyl group onto the adenine at position 37 in tRNAs that read codons beginning with uridine, leading to the formation of N6-(dimethylallyl)adenosine (i(6)A). The chain is tRNA dimethylallyltransferase from Methylococcus capsulatus (strain ATCC 33009 / NCIMB 11132 / Bath).